A 593-amino-acid polypeptide reads, in one-letter code: Transcription factor ATEG_07667 (593 aa).

The segment at residues 18–47 is a DNA-binding region (zn(2)-C6 fungal-type); it reads CTQCYKAKCRCVRTPSGDTCERCIRLKKRC.

The protein localises to the nucleus. Transcriptional regulator that regulates both the azasperpyranone A biosynthesis clusters A and B. Specifically up-regulates the expression of the cluster A and B specific transcription factors ATEG_03638 and ATEG_07666, which in turn activate the expression of their respective clusters. This chain is Transcription factor ATEG_07667, found in Aspergillus terreus (strain NIH 2624 / FGSC A1156).